We begin with the raw amino-acid sequence, 622 residues long: 1-deoxy-D-xylulose-5-phosphate synthase (622 aa).

Residues His80 and 121–123 contribute to the thiamine diphosphate site; that span reads GHS. Mg(2+) is bound at residue Asp152. Thiamine diphosphate is bound by residues 153–154, Asn181, Tyr288, and Glu370; that span reads GA. Residue Asn181 participates in Mg(2+) binding.

It belongs to the transketolase family. DXPS subfamily. In terms of assembly, homodimer. It depends on Mg(2+) as a cofactor. Requires thiamine diphosphate as cofactor.

The catalysed reaction is D-glyceraldehyde 3-phosphate + pyruvate + H(+) = 1-deoxy-D-xylulose 5-phosphate + CO2. It functions in the pathway metabolic intermediate biosynthesis; 1-deoxy-D-xylulose 5-phosphate biosynthesis; 1-deoxy-D-xylulose 5-phosphate from D-glyceraldehyde 3-phosphate and pyruvate: step 1/1. Catalyzes the acyloin condensation reaction between C atoms 2 and 3 of pyruvate and glyceraldehyde 3-phosphate to yield 1-deoxy-D-xylulose-5-phosphate (DXP). This Shewanella baltica (strain OS195) protein is 1-deoxy-D-xylulose-5-phosphate synthase.